Reading from the N-terminus, the 203-residue chain is Putative 3-methyladenine DNA glycosylase (203 aa).

The protein belongs to the DNA glycosylase MPG family.

This Clostridium botulinum (strain ATCC 19397 / Type A) protein is Putative 3-methyladenine DNA glycosylase.